Here is a 427-residue protein sequence, read N- to C-terminus: Glutamate-1-semialdehyde 2,1-aminomutase (427 aa).

K265 is modified (N6-(pyridoxal phosphate)lysine).

This sequence belongs to the class-III pyridoxal-phosphate-dependent aminotransferase family. HemL subfamily. Homodimer. The cofactor is pyridoxal 5'-phosphate.

It localises to the cytoplasm. It carries out the reaction (S)-4-amino-5-oxopentanoate = 5-aminolevulinate. It participates in porphyrin-containing compound metabolism; protoporphyrin-IX biosynthesis; 5-aminolevulinate from L-glutamyl-tRNA(Glu): step 2/2. This chain is Glutamate-1-semialdehyde 2,1-aminomutase, found in Burkholderia ambifaria (strain MC40-6).